Consider the following 151-residue polypeptide: 3-dehydroquinate dehydratase (151 aa).

The Proton acceptor role is filled by tyrosine 24. Substrate contacts are provided by asparagine 76, histidine 82, and aspartate 89. Histidine 102 acts as the Proton donor in catalysis. Residues 103 to 104 (LS) and arginine 113 each bind substrate.

Belongs to the type-II 3-dehydroquinase family. As to quaternary structure, homododecamer.

It carries out the reaction 3-dehydroquinate = 3-dehydroshikimate + H2O. It participates in metabolic intermediate biosynthesis; chorismate biosynthesis; chorismate from D-erythrose 4-phosphate and phosphoenolpyruvate: step 3/7. Functionally, catalyzes a trans-dehydration via an enolate intermediate. The protein is 3-dehydroquinate dehydratase of Acinetobacter baumannii (strain AB307-0294).